Consider the following 138-residue polypeptide: Nucleoside diphosphate kinase (138 aa).

Lys-10, Phe-58, Arg-86, Thr-92, Arg-103, and Asn-113 together coordinate ATP. The active-site Pros-phosphohistidine intermediate is His-116.

This sequence belongs to the NDK family. Homotetramer. The cofactor is Mg(2+).

The protein localises to the cytoplasm. It catalyses the reaction a 2'-deoxyribonucleoside 5'-diphosphate + ATP = a 2'-deoxyribonucleoside 5'-triphosphate + ADP. It carries out the reaction a ribonucleoside 5'-diphosphate + ATP = a ribonucleoside 5'-triphosphate + ADP. In terms of biological role, major role in the synthesis of nucleoside triphosphates other than ATP. The ATP gamma phosphate is transferred to the NDP beta phosphate via a ping-pong mechanism, using a phosphorylated active-site intermediate. The chain is Nucleoside diphosphate kinase from Actinobacillus pleuropneumoniae serotype 5b (strain L20).